Consider the following 182-residue polypeptide: Fucoxanthin-chlorophyll a-c binding protein D, chloroplastic (182 aa).

Residues 1–4 (AMKM) constitute a chloroplast transit peptide. A run of 3 helical transmembrane segments spans residues 46 to 66 (IAML…PGML), 87 to 107 (IPPG…LAVM), and 148 to 168 (GRAA…NNKP).

Belongs to the fucoxanthin chlorophyll protein family. In terms of assembly, the LHC complex of chromophytic algae is composed of fucoxanthin, chlorophyll A and C bound non-covalently by fucoxanthin chlorophyll proteins (FCPs). The ratio of pigments in this LHC is; fucoxanthin: chlorophyll C: chlorophyll A; (0.6-1): (0.1-0.3): (1).

Its subcellular location is the plastid. The protein resides in the chloroplast thylakoid membrane. Functionally, the light-harvesting complex (LHC) functions as a light receptor, it captures and delivers excitation energy to photosystems with which it is closely associated. Energy is transferred from the carotenoid and chlorophyll C (or B) to chlorophyll A and the photosynthetic reaction centers where it is used to synthesize ATP and reducing power. This chain is Fucoxanthin-chlorophyll a-c binding protein D, chloroplastic (FCPD), found in Macrocystis pyrifera (Giant kelp).